The following is a 317-amino-acid chain: Protoheme IX farnesyltransferase (317 aa).

A run of 9 helical transmembrane segments spans residues 29-49, 53-73, 102-122, 123-143, 151-171, 179-199, 224-241, 245-267, and 283-303; these read LILL…QGRV, LLLI…TINC, VFLA…FANL, LSAC…THWL, IVIG…AVTG, VLFG…AMLI, IFLY…LVYP, VSWG…AWQL, and FSIL…LLLP.

The protein belongs to the UbiA prenyltransferase family. Protoheme IX farnesyltransferase subfamily.

It localises to the cell inner membrane. The enzyme catalyses heme b + (2E,6E)-farnesyl diphosphate + H2O = Fe(II)-heme o + diphosphate. Its pathway is porphyrin-containing compound metabolism; heme O biosynthesis; heme O from protoheme: step 1/1. Its function is as follows. Converts heme B (protoheme IX) to heme O by substitution of the vinyl group on carbon 2 of heme B porphyrin ring with a hydroxyethyl farnesyl side group. The sequence is that of Protoheme IX farnesyltransferase from Thermosynechococcus vestitus (strain NIES-2133 / IAM M-273 / BP-1).